Reading from the N-terminus, the 185-residue chain is Translocon-associated protein subunit gamma (185 aa).

M1 carries the N-acetylmethionine modification. Over 1–27 (MAPKGSCKQQSEEDLLLQDFSRNLSAK) the chain is Lumenal. S11 is modified (phosphoserine). The helical transmembrane segment at 28–48 (SSALFFGNAFIVSAIPIWLYW) threads the bilayer. The Cytoplasmic portion of the chain corresponds to 49 to 54 (RIWHMD). A helical membrane pass occupies residues 55 to 76 (LIQSAVLYSVMTLVSTYLVAFA). Topologically, residues 77 to 135 (YKNVKFVLKHKVAQKREDAVSKEVTRKLSEADNRKMSRKEKDERILWKKNEVADYEATT) are lumenal. S105 carries the post-translational modification Phosphoserine. The helical transmembrane segment at 136–157 (FSIFYNNTLFLVVVIVASFFIL) threads the bilayer. The Cytoplasmic segment spans residues 158 to 163 (KNFNPT). Residues 164–184 (VNYILSISASSGLIALLSTGS) traverse the membrane as a helical segment.

It belongs to the TRAP-gamma family. As to quaternary structure, heterotetramer of TRAP-alpha, TRAP-beta, TRAP-delta and TRAP-gamma.

The protein localises to the endoplasmic reticulum membrane. Functionally, TRAP proteins are part of a complex whose function is to bind calcium to the ER membrane and thereby regulate the retention of ER resident proteins. The protein is Translocon-associated protein subunit gamma (SSR3) of Pongo abelii (Sumatran orangutan).